A 590-amino-acid polypeptide reads, in one-letter code: L-erythrulose kinase (590 aa).

The DhaK domain maps to 7-331 (QPSSFARELT…WRAPADAPAF (325 aa)). The active-site Tele-hemiaminal-histidine intermediate is the His217. The DhaL domain occupies 366–568 (HCVAAALNAA…LAMILDAVSA (203 aa)). ADP is bound by residues 398-401 (HGIG), 441-442 (TS), Gly483, Arg540, and 553-555 (DAG).

It catalyses the reaction L-erythrulose + ATP = L-erythrulose 1-phosphate + ADP + H(+). It functions in the pathway carbohydrate metabolism. In terms of biological role, involved in catabolism of D-apiose. Catalyzes the phosphorylation of L-erythrulose to L-erythrulose 1-phosphate. Can also phosphorylate D-erythrulose and dihydroxyacetone in vitro. The polypeptide is L-erythrulose kinase (Pectobacterium atrosepticum (strain SCRI 1043 / ATCC BAA-672) (Erwinia carotovora subsp. atroseptica)).